We begin with the raw amino-acid sequence, 203 residues long: dITP/XTP pyrophosphatase (203 aa).

Residue 8-13 (SNNAGK) coordinates substrate. Residues Asp40 and Asp69 each coordinate Mg(2+). Catalysis depends on Asp69, which acts as the Proton acceptor. Residues Ser70, 152-155 (FGYD), Lys175, and 180-181 (HR) each bind substrate.

It belongs to the HAM1 NTPase family. Homodimer. Mg(2+) serves as cofactor.

It catalyses the reaction XTP + H2O = XMP + diphosphate + H(+). The enzyme catalyses dITP + H2O = dIMP + diphosphate + H(+). It carries out the reaction ITP + H2O = IMP + diphosphate + H(+). Its function is as follows. Pyrophosphatase that catalyzes the hydrolysis of nucleoside triphosphates to their monophosphate derivatives, with a high preference for the non-canonical purine nucleotides XTP (xanthosine triphosphate), dITP (deoxyinosine triphosphate) and ITP. Seems to function as a house-cleaning enzyme that removes non-canonical purine nucleotides from the nucleotide pool, thus preventing their incorporation into DNA/RNA and avoiding chromosomal lesions. The chain is dITP/XTP pyrophosphatase from Nitrosomonas europaea (strain ATCC 19718 / CIP 103999 / KCTC 2705 / NBRC 14298).